The chain runs to 355 residues: Myricetin 7/4'-O-methyltransferase 2 (355 aa).

Aspartate 221 provides a ligand contact to S-adenosyl-L-methionine. The active-site Proton acceptor is histidine 259.

It belongs to the class I-like SAM-binding methyltransferase superfamily. Cation-independent O-methyltransferase family. As to quaternary structure, homodimer. In terms of tissue distribution, mainly expressed in leaves secreting glandular trichomes types 1 and 4 and, to a lesser extent, in storage trichomes type 6.

The catalysed reaction is quercetin + S-adenosyl-L-methionine = rhamnetin + S-adenosyl-L-homocysteine + H(+). It carries out the reaction kaempferol + S-adenosyl-L-methionine = kaempferide + S-adenosyl-L-homocysteine + H(+). It catalyses the reaction myricetin + S-adenosyl-L-methionine = 7-O-methylmyricetin + S-adenosyl-L-homocysteine + H(+). The enzyme catalyses kaempferide + S-adenosyl-L-methionine = 7,4'-O-dimethylkaempferol + S-adenosyl-L-homocysteine + H(+). The catalysed reaction is isorhamnetin + S-adenosyl-L-methionine = 3',4'-O-dimethylquercetin + S-adenosyl-L-homocysteine + 2 H(+). It carries out the reaction 3',4',5,7-tetrahydroxy-3-methoxyflavone + S-adenosyl-L-methionine = 3',4',5-trihydroxy-3,7-dimethoxyflavone + S-adenosyl-L-homocysteine + H(+). It catalyses the reaction rhamnetin + S-adenosyl-L-methionine = 7,4'-O-dimethylquercetin + S-adenosyl-L-homocysteine + H(+). The enzyme catalyses syringetin + S-adenosyl-L-methionine = 7,3',5'-O-trimethylmyricetin + S-adenosyl-L-homocysteine + H(+). The catalysed reaction is 3',4',5'-O-trimethylmyricetin + S-adenosyl-L-methionine = 7,3',4',5'-O-tetramethylmyricetin + S-adenosyl-L-homocysteine. Its pathway is flavonoid metabolism. Its function is as follows. Flavonoid 7/4'-O-methyltransferase involved in the biosynthesis of polymethoxylated flavonoids natural products such as myricetin derivatives, aroma compounds possessing antioxidant properties and exhibiting pharmacological activities such as anti-carcinogen, anti-viral, anti-thrombotic, anti-diabetic, anti-atherosclerotic, and anti-inflammatory effects. Catalyzes S-adenosylmethionine-dependent regioselective 7/4'-O-methylation of flavonoids; active on various hydroxylated flavonoid substrates, including myricetin, quercetin and kaempferol. Mediates the formation of 4'-methyl derivatives from kaempferol, 3'-methyl quercetin (isorhamnetin), 7-methyl quercetin (rhamnetin) and 3'-methyl myricetin, producing 4'-methyl kaempferol (kaempferide), 3',4'-dimethyl quercetin (4'-O-methyl isorhamnetin), 7,4'-dimethyl quercetin (4'-O-methyl rhamnetin, rhamnacene) and 3',4'-dimethyl myricetin, respectively. Triggers the 7-O-methylation of quercetin, myricetin, 4'-methyl kaempferol (kaempferide), 3-methyl quercetin, 3',5'-dimethyl myricetin (syringetin) and 3',4',5'-trimethyl myricetin, thus leading to production of 7-methyl quercetin (rhamnetin), 7-methyl myricetin, 7,4'-dimethyl kaempferol (7-O-methyl kaempferide), 3,7-dimethyl quercetin, 7,3',5'-trimethyl myricetin (7-O-methyl syringetin) and 7,3',4',5'-tetramethyl myricetin, respectively. The protein is Myricetin 7/4'-O-methyltransferase 2 of Solanum habrochaites (Wild tomato).